We begin with the raw amino-acid sequence, 395 residues long: Trans-2-enoyl-CoA reductase [NADH] (395 aa).

Residues 47-52 (GASTGY), 73-74 (FE), 110-111 (DA), and 138-139 (LA) contribute to the NAD(+) site. Residue Y224 participates in substrate binding. The active-site Proton donor is Y234. Residues K243 and 272 to 274 (VVT) each bind NAD(+).

The protein belongs to the TER reductase family. Monomer.

The catalysed reaction is a 2,3-saturated acyl-CoA + NAD(+) = a (2E)-enoyl-CoA + NADH + H(+). It functions in the pathway lipid metabolism; fatty acid biosynthesis. Involved in the fatty acid synthesis (FAS II). Catalyzes the reduction of a carbon-carbon double bond in an enoyl moiety that is covalently linked to a coenzyme A (CoA). In Ruminiclostridium cellulolyticum (strain ATCC 35319 / DSM 5812 / JCM 6584 / H10) (Clostridium cellulolyticum), this protein is Trans-2-enoyl-CoA reductase [NADH].